Here is a 235-residue protein sequence, read N- to C-terminus: UPF0702 transmembrane protein YdfS (235 aa).

2 consecutive transmembrane segments (helical) span residues 32–52 and 60–80; these read MTIF…GLAY and NMAI…FLSI.

The protein belongs to the UPF0702 family.

It is found in the cell membrane. This chain is UPF0702 transmembrane protein YdfS (ydfS), found in Bacillus subtilis (strain 168).